The chain runs to 353 residues: MDFLNKHSSCISKLFSCPSQWQLNAAPGWQAIAAWALIAAGGFFVISRALLFGRVLLSLFVLPGKSLRSFGPKGSWAVVTGASDGLGKEFALQLARAGYNIVLVSRTASKLDTLSDELTSKYPSVQTKVLAMDFARNQDSDYQKLKELIGDLDVAVLINNVGKSHDMPVPFALTSEEEMTDIVTINCMGTLRVTQLVVPGMMQRRRGLILTMGSFGGLLPTPLLATYSGSKAFLQQWSTSLGSELAPYGITVELVQAYLITSAMSKVRRTSALIPNPRAFVKSVLSKIGRNGGSPGYAYSSSPYWSHGLMAWFLTCVTGTMGKLVVGQNRSMHESIRKRALRKAEREKGKKST.

A helical transmembrane segment spans residues Ala33–Gly53. NADP(+) contacts are provided by Val78, Asp133, Asp141, Asn160, Tyr227, Lys231, Ile260, and Ser262. The active-site Proton donor is Tyr227. Catalysis depends on Lys231, which acts as the Lowers pKa of active site Tyr.

Belongs to the short-chain dehydrogenases/reductases (SDR) family.

Its subcellular location is the endoplasmic reticulum membrane. It carries out the reaction a very-long-chain (3R)-3-hydroxyacyl-CoA + NADP(+) = a very-long-chain 3-oxoacyl-CoA + NADPH + H(+). It participates in lipid metabolism; fatty acid biosynthesis. Functionally, component of the microsomal membrane bound fatty acid elongation system, which produces the 26-carbon very long-chain fatty acids (VLCFA) from palmitate. Catalyzes the reduction of the 3-ketoacyl-CoA intermediate that is formed in each cycle of fatty acid elongation. VLCFAs serve as precursors for ceramide and sphingolipids. The sequence is that of Very-long-chain 3-oxoacyl-CoA reductase from Aspergillus terreus (strain NIH 2624 / FGSC A1156).